Here is a 400-residue protein sequence, read N- to C-terminus: 1-deoxy-D-xylulose 5-phosphate reductoisomerase (400 aa).

7 residues coordinate NADPH: threonine 10, glycine 11, serine 12, isoleucine 13, glycine 36, asparagine 38, and asparagine 124. Lysine 125 contacts 1-deoxy-D-xylulose 5-phosphate. Glutamate 126 contributes to the NADPH binding site. Aspartate 150 contacts Mn(2+). The 1-deoxy-D-xylulose 5-phosphate site is built by serine 151, glutamate 152, serine 186, and histidine 209. Glutamate 152 contacts Mn(2+). Glycine 215 serves as a coordination point for NADPH. 1-deoxy-D-xylulose 5-phosphate-binding residues include serine 222, asparagine 227, lysine 228, and glutamate 231. Glutamate 231 is a binding site for Mn(2+).

Belongs to the DXR family. The cofactor is Mg(2+). It depends on Mn(2+) as a cofactor.

The enzyme catalyses 2-C-methyl-D-erythritol 4-phosphate + NADP(+) = 1-deoxy-D-xylulose 5-phosphate + NADPH + H(+). The protein operates within isoprenoid biosynthesis; isopentenyl diphosphate biosynthesis via DXP pathway; isopentenyl diphosphate from 1-deoxy-D-xylulose 5-phosphate: step 1/6. Functionally, catalyzes the NADPH-dependent rearrangement and reduction of 1-deoxy-D-xylulose-5-phosphate (DXP) to 2-C-methyl-D-erythritol 4-phosphate (MEP). This Aliivibrio salmonicida (strain LFI1238) (Vibrio salmonicida (strain LFI1238)) protein is 1-deoxy-D-xylulose 5-phosphate reductoisomerase.